The following is a 134-amino-acid chain: Putative oxidoreductase CatD (134 aa).

Transmembrane regions (helical) follow at residues 5–25 (FEIG…VHGL), 46–66 (FMAY…FFGL), 70–90 (IVGV…KLKA), and 91–111 (PFMG…HLAL).

This sequence belongs to the DoxX family.

The protein localises to the cell membrane. In terms of biological role, essential for growth and viability in the presence of catechol and probably involved in the detoxification of catechol. In Bacillus subtilis (strain 168), this protein is Putative oxidoreductase CatD (catD).